The following is a 302-amino-acid chain: Methionyl-tRNA formyltransferase (302 aa).

Residue 108 to 111 (SLLP) coordinates (6S)-5,6,7,8-tetrahydrofolate.

Belongs to the Fmt family.

The catalysed reaction is L-methionyl-tRNA(fMet) + (6R)-10-formyltetrahydrofolate = N-formyl-L-methionyl-tRNA(fMet) + (6S)-5,6,7,8-tetrahydrofolate + H(+). Functionally, attaches a formyl group to the free amino group of methionyl-tRNA(fMet). The formyl group appears to play a dual role in the initiator identity of N-formylmethionyl-tRNA by promoting its recognition by IF2 and preventing the misappropriation of this tRNA by the elongation apparatus. In Nitratiruptor sp. (strain SB155-2), this protein is Methionyl-tRNA formyltransferase.